We begin with the raw amino-acid sequence, 545 residues long: ATP synthase subunit alpha (545 aa).

173–180 (GDRKTGKT) serves as a coordination point for ATP.

The protein belongs to the ATPase alpha/beta chains family. F-type ATPases have 2 components, CF(1) - the catalytic core - and CF(0) - the membrane proton channel. CF(1) has five subunits: alpha(3), beta(3), gamma(1), delta(1), epsilon(1). CF(0) has three main subunits: a(1), b(2) and c(9-12). The alpha and beta chains form an alternating ring which encloses part of the gamma chain. CF(1) is attached to CF(0) by a central stalk formed by the gamma and epsilon chains, while a peripheral stalk is formed by the delta and b chains.

The protein localises to the cell membrane. It carries out the reaction ATP + H2O + 4 H(+)(in) = ADP + phosphate + 5 H(+)(out). Produces ATP from ADP in the presence of a proton gradient across the membrane. The alpha chain is a regulatory subunit. In Renibacterium salmoninarum (strain ATCC 33209 / DSM 20767 / JCM 11484 / NBRC 15589 / NCIMB 2235), this protein is ATP synthase subunit alpha.